The sequence spans 146 residues: 3-dehydroquinate dehydratase (146 aa).

Tyrosine 22 functions as the Proton acceptor in the catalytic mechanism. The substrate site is built by asparagine 73, histidine 79, and aspartate 86. Histidine 99 functions as the Proton donor in the catalytic mechanism. Substrate is bound by residues 100–101 (LS) and arginine 110.

It belongs to the type-II 3-dehydroquinase family. In terms of assembly, homododecamer.

The enzyme catalyses 3-dehydroquinate = 3-dehydroshikimate + H2O. It participates in metabolic intermediate biosynthesis; chorismate biosynthesis; chorismate from D-erythrose 4-phosphate and phosphoenolpyruvate: step 3/7. In terms of biological role, catalyzes a trans-dehydration via an enolate intermediate. The chain is 3-dehydroquinate dehydratase from Synechococcus sp. (strain CC9902).